A 579-amino-acid polypeptide reads, in one-letter code: MSAKDYDFDIESVLPEEKAPQVSEAKKDYISQESTVLSGQVDFVEPEHKGFFQNLIDGFKPAREADGNGGPALKRGLSTRHMQLMSIGGAIGSGLYVGSGSALADGGPASVIINYILIGIMMFFVIYALGEMAVAYPVAGSFNTYATRFIDPAWGFAVSWNYFFNYFVTFPFELTTCAITFTFWTDVNCAVWISIFLVVVIGINLFGVRVFGEVEFVLALIKVVATVGFIILAIIINCGGVPTDHRGYIGGSIIKQKPFRHGFKGFCSVYTTAAFSFSGTEIVGLAAAEVGDPRKTLPGAVKQVFWRVAIFYIVSLILIGLLISPDDPKLMGNGSASVSPFVLAIQEANIKGLPSVFNAVIIISVISVTNSSTYTAGRTLHGMANLKQAPAFFKYTDRLGRPLIAMIVVLSFGFFAYINEANNNGNDISDTVFDWLLAISGLSNFFTWGSICLSHIMFRLAFKKQGHSLKELGFVSPMGIWGSVIGLGFNILCLMAEFYVSLFPIGGSPNANDFFQGYLAACITLVFFIGYKIYDRSHIPSLDKLDITTGLKTYEYEETKDSSDTGRFRFFKKIINTVC.

Residues 1–83 lie on the Cytoplasmic side of the membrane; sequence MSAKDYDFDI…KRGLSTRHMQ (83 aa). Residues 84 to 104 form a helical membrane-spanning segment; sequence LMSIGGAIGSGLYVGSGSALA. Residues 105–108 are Extracellular-facing; it reads DGGP. The helical transmembrane segment at 109-129 threads the bilayer; sequence ASVIINYILIGIMMFFVIYAL. Residues 130-161 are Cytoplasmic-facing; sequence GEMAVAYPVAGSFNTYATRFIDPAWGFAVSWN. A helical membrane pass occupies residues 162 to 184; it reads YFFNYFVTFPFELTTCAITFTFW. Over 185-186 the chain is Extracellular; it reads TD. A helical membrane pass occupies residues 187-207; that stretch reads VNCAVWISIFLVVVIGINLFG. Topologically, residues 208–215 are cytoplasmic; the sequence is VRVFGEVE. Residues 216–236 form a helical membrane-spanning segment; the sequence is FVLALIKVVATVGFIILAIII. At 237-265 the chain is on the extracellular side; the sequence is NCGGVPTDHRGYIGGSIIKQKPFRHGFKG. A helical transmembrane segment spans residues 266–286; it reads FCSVYTTAAFSFSGTEIVGLA. Topologically, residues 287–303 are cytoplasmic; the sequence is AAEVGDPRKTLPGAVKQ. Residues 304-324 form a helical membrane-spanning segment; the sequence is VFWRVAIFYIVSLILIGLLIS. The Extracellular segment spans residues 325 to 347; the sequence is PDDPKLMGNGSASVSPFVLAIQE. The helical transmembrane segment at 348-368 threads the bilayer; the sequence is ANIKGLPSVFNAVIIISVISV. The Cytoplasmic portion of the chain corresponds to 369 to 401; the sequence is TNSSTYTAGRTLHGMANLKQAPAFFKYTDRLGR. A helical membrane pass occupies residues 402-422; sequence PLIAMIVVLSFGFFAYINEAN. Residues 423–431 are Extracellular-facing; the sequence is NNGNDISDT. A helical membrane pass occupies residues 432 to 452; that stretch reads VFDWLLAISGLSNFFTWGSIC. Residues 453 to 471 are Cytoplasmic-facing; sequence LSHIMFRLAFKKQGHSLKE. The helical transmembrane segment at 472–492 threads the bilayer; it reads LGFVSPMGIWGSVIGLGFNIL. Residues 493–513 are Extracellular-facing; that stretch reads CLMAEFYVSLFPIGGSPNAND. Residues 514 to 534 traverse the membrane as a helical segment; sequence FFQGYLAACITLVFFIGYKIY. Residues 535 to 579 lie on the Cytoplasmic side of the membrane; sequence DRSHIPSLDKLDITTGLKTYEYEETKDSSDTGRFRFFKKIINTVC.

This sequence belongs to the amino acid-polyamine-organocation (APC) superfamily.

Its subcellular location is the golgi apparatus membrane. The protein resides in the cell membrane. Probable amino acid transporter that may play a role in function in microtubule organization since it causes microtubule defects when overexpressed. This chain is Amino acid transporter 1 (aat1), found in Schizosaccharomyces pombe (strain 972 / ATCC 24843) (Fission yeast).